We begin with the raw amino-acid sequence, 128 residues long: Small ribosomal subunit protein bS16 (128 aa).

Residues 107–128 form a disordered region; it reads AAEAKAAAANESDDSGTDSTES. A compositionally biased stretch (acidic residues) spans 117–128; that stretch reads ESDDSGTDSTES.

The protein belongs to the bacterial ribosomal protein bS16 family.

This is Small ribosomal subunit protein bS16 from Synechococcus sp. (strain CC9311).